Reading from the N-terminus, the 470-residue chain is Serine/threonine-protein kinase PEPKR2 (470 aa).

A Protein kinase domain is found at 107–355 (YVFGRNIGKG…ADEVLRHPWI (249 aa)). ATP-binding positions include 113 to 121 (IGKGKFGSV) and lysine 136. Aspartate 224 serves as the catalytic Proton acceptor. The span at 377–386 (GSSTCLQNRS) shows a compositional bias: polar residues. 2 disordered regions span residues 377–419 (GSST…EEED) and 441–464 (RSRV…TSTS). The segment covering 387–403 (PTEKTDLNRADREKKIP) has biased composition (basic and acidic residues). Residues 445–464 (CSPTNNPIEQQHSSNLTSTS) show a composition bias toward polar residues.

This sequence belongs to the protein kinase superfamily. Ser/Thr protein kinase family.

It carries out the reaction L-seryl-[protein] + ATP = O-phospho-L-seryl-[protein] + ADP + H(+). The catalysed reaction is L-threonyl-[protein] + ATP = O-phospho-L-threonyl-[protein] + ADP + H(+). The chain is Serine/threonine-protein kinase PEPKR2 (PEPKR2) from Arabidopsis thaliana (Mouse-ear cress).